Consider the following 55-residue polypeptide: Spermatid nuclear transition protein 1 (55 aa).

Positions 1–42 (MSTSRKLKSQGTRRGKNRTPHKGVKRGCSKRKYRKSSLKSRK) are enriched in basic residues. Residues 1–55 (MSTSRKLKSQGTRRGKNRTPHKGVKRGCSKRKYRKSSLKSRKRCDDANRNFRSHL) form a disordered region. 4 positions are modified to phosphoserine: Ser-9, Ser-36, Ser-37, and Ser-40.

It belongs to the nuclear transition protein 1 family. In terms of tissue distribution, testis.

The protein resides in the nucleus. The protein localises to the chromosome. Its function is as follows. Plays a key role in the replacement of histones to protamine in the elongating spermatids of mammals. In condensing spermatids, loaded onto the nucleosomes, where it promotes the recruitment and processing of protamines, which are responsible for histone eviction. The chain is Spermatid nuclear transition protein 1 (TNP1) from Ovis aries (Sheep).